Here is a 256-residue protein sequence, read N- to C-terminus: Triosephosphate isomerase (256 aa).

Position 10 to 12 (10 to 12 (NWK)) interacts with substrate. The active-site Electrophile is His-99. Glu-171 serves as the catalytic Proton acceptor. Substrate contacts are provided by residues Gly-177, Ser-216, and 237–238 (GG).

It belongs to the triosephosphate isomerase family. Homodimer.

It is found in the cytoplasm. It carries out the reaction D-glyceraldehyde 3-phosphate = dihydroxyacetone phosphate. Its pathway is carbohydrate biosynthesis; gluconeogenesis. It participates in carbohydrate degradation; glycolysis; D-glyceraldehyde 3-phosphate from glycerone phosphate: step 1/1. In terms of biological role, involved in the gluconeogenesis. Catalyzes stereospecifically the conversion of dihydroxyacetone phosphate (DHAP) to D-glyceraldehyde-3-phosphate (G3P). The sequence is that of Triosephosphate isomerase from Colwellia psychrerythraea (strain 34H / ATCC BAA-681) (Vibrio psychroerythus).